Here is a 486-residue protein sequence, read N- to C-terminus: Cardiolipin synthase A (486 aa).

The next 2 membrane-spanning stretches (helical) occupy residues 3-23 and 38-58; these read TVYT…IAGV and MAWL…YLAV. 2 PLD phosphodiesterase domains span residues 219 to 246 and 399 to 426; these read MDLR…VDPR and EGGL…DMRS. Residues H224, K226, D231, H404, K406, and D411 contribute to the active site.

It belongs to the phospholipase D family. Cardiolipin synthase subfamily. ClsA sub-subfamily.

Its subcellular location is the cell inner membrane. The catalysed reaction is 2 a 1,2-diacyl-sn-glycero-3-phospho-(1'-sn-glycerol) = a cardiolipin + glycerol. Catalyzes the reversible phosphatidyl group transfer from one phosphatidylglycerol molecule to another to form cardiolipin (CL) (diphosphatidylglycerol) and glycerol. This Escherichia coli O7:K1 (strain IAI39 / ExPEC) protein is Cardiolipin synthase A.